The sequence spans 173 residues: NAD(P)H-quinone oxidoreductase subunit I, chloroplastic (173 aa).

2 consecutive 4Fe-4S ferredoxin-type domains span residues Gly55 to Asp84 and Arg95 to Glu124. Residues Cys64, Cys67, Cys70, Cys74, Cys104, Cys107, Cys110, and Cys114 each coordinate [4Fe-4S] cluster.

Belongs to the complex I 23 kDa subunit family. As to quaternary structure, NDH is composed of at least 16 different subunits, 5 of which are encoded in the nucleus. [4Fe-4S] cluster serves as cofactor.

It is found in the plastid. It localises to the chloroplast thylakoid membrane. It catalyses the reaction a plastoquinone + NADH + (n+1) H(+)(in) = a plastoquinol + NAD(+) + n H(+)(out). It carries out the reaction a plastoquinone + NADPH + (n+1) H(+)(in) = a plastoquinol + NADP(+) + n H(+)(out). NDH shuttles electrons from NAD(P)H:plastoquinone, via FMN and iron-sulfur (Fe-S) centers, to quinones in the photosynthetic chain and possibly in a chloroplast respiratory chain. The immediate electron acceptor for the enzyme in this species is believed to be plastoquinone. Couples the redox reaction to proton translocation, and thus conserves the redox energy in a proton gradient. The protein is NAD(P)H-quinone oxidoreductase subunit I, chloroplastic of Nephroselmis olivacea (Green alga).